We begin with the raw amino-acid sequence, 623 residues long: Putative ABC transporter ATP-binding protein MG014 (623 aa).

In terms of domain architecture, ABC transmembrane type-1 spans 16 to 325 (LILAPFFTFA…YIVLGFILTS (310 aa)). Helical transmembrane passes span 27–47 (IVID…VFSI), 81–101 (VLAT…LISI), 157–177 (FLRL…FAVT), 181–201 (DMSI…GILN), 266–286 (NIPF…LLVF), and 307–327 (IFAF…TSLT). The ABC transporter domain maps to 365–611 (LEFRNISFGL…CSLYQKMKES (247 aa)). Residue 400–407 (GPTGSGKS) coordinates ATP.

It belongs to the ABC transporter superfamily.

It localises to the cell membrane. This chain is Putative ABC transporter ATP-binding protein MG014, found in Mycoplasma genitalium (strain ATCC 33530 / DSM 19775 / NCTC 10195 / G37) (Mycoplasmoides genitalium).